The chain runs to 506 residues: Maturase K (506 aa).

Belongs to the intron maturase 2 family. MatK subfamily.

It localises to the plastid. The protein resides in the chloroplast. In terms of biological role, usually encoded in the trnK tRNA gene intron. Probably assists in splicing its own and other chloroplast group II introns. The sequence is that of Maturase K from Trifolium hirtum (Rose clover).